We begin with the raw amino-acid sequence, 96 residues long: uncharacterized protein (96 aa).

An N-terminal signal peptide occupies residues 1-30; the sequence is MLILSVFCAVFYAFLTAIVANFSLKTLAIG. Over 31-54 the chain is Extracellular; sequence ATFVKSHLKSNPIPYGDLVADSLD. A helical membrane pass occupies residues 55–75; the sequence is FGNITPTVTLLFAILIAVLAL. Over 76–96 the chain is Cytoplasmic; the sequence is KCEFSCSTSAPAGQASGRKVK.

The protein resides in the membrane. This is an uncharacterized protein from Dictyostelium discoideum (Social amoeba).